The following is a 370-amino-acid chain: MTTTPLILLAAGGTGGHLFPAEALGVELMKRDLRVRLVTDSRALRYSGLFSKDMTDVVPSETVRGRSPLALARTGLMLATGTVVALNLMRRLKPAAVIGFGGYPTLPPLIAARLKGIPTVIHDANAVMGRANRLLSRRVNAIATSLPGVLDKEPSLIGKTTTTGTPMRPAILAASTVPFATPGSDGPLRVLVVGGSQGARVMSDIVPGAIEKLGSPLWQRLVLTQQVRDEDMARVRAVYERLRINAELAPFFADLPSRLASSHIIVSRSGAGTVAELGAIGRPSILVPLPGAIDQDQFANAGVLADVGGAIRIVQSDFTPDRLAAELSALAADPARLAAMAAAARTVGRLDAAERLADLVMKVARLDSPA.

Residues 14 to 16, Asn-125, Arg-168, Ser-196, and Gln-297 contribute to the UDP-N-acetyl-alpha-D-glucosamine site; that span reads TGG.

It belongs to the glycosyltransferase 28 family. MurG subfamily.

The protein resides in the cell inner membrane. The enzyme catalyses di-trans,octa-cis-undecaprenyl diphospho-N-acetyl-alpha-D-muramoyl-L-alanyl-D-glutamyl-meso-2,6-diaminopimeloyl-D-alanyl-D-alanine + UDP-N-acetyl-alpha-D-glucosamine = di-trans,octa-cis-undecaprenyl diphospho-[N-acetyl-alpha-D-glucosaminyl-(1-&gt;4)]-N-acetyl-alpha-D-muramoyl-L-alanyl-D-glutamyl-meso-2,6-diaminopimeloyl-D-alanyl-D-alanine + UDP + H(+). Its pathway is cell wall biogenesis; peptidoglycan biosynthesis. Its function is as follows. Cell wall formation. Catalyzes the transfer of a GlcNAc subunit on undecaprenyl-pyrophosphoryl-MurNAc-pentapeptide (lipid intermediate I) to form undecaprenyl-pyrophosphoryl-MurNAc-(pentapeptide)GlcNAc (lipid intermediate II). This is UDP-N-acetylglucosamine--N-acetylmuramyl-(pentapeptide) pyrophosphoryl-undecaprenol N-acetylglucosamine transferase from Nitrobacter hamburgensis (strain DSM 10229 / NCIMB 13809 / X14).